A 235-amino-acid polypeptide reads, in one-letter code: Rab-like protein 3 (235 aa).

The tract at residues 1–235 (MASLDRVKVL…GGNFKSLHYD (235 aa)) is small GTPase-like. Residues 16–21 (GVGKSS), 148–150 (KLD), and 179–180 (DC) contribute to the GTP site.

Belongs to the small GTPase superfamily. Rab family. Homodimer.

Its function is as follows. Required for KRAS signaling regulation and modulation of cell proliferation. Regulator of KRAS prenylation, and probably prenylation of other small GTPases. Required for lymphocyte development and function. Not required for myeloid cell development. This Xenopus tropicalis (Western clawed frog) protein is Rab-like protein 3 (rabl3).